A 101-amino-acid chain; its full sequence is NAD(P)H-quinone oxidoreductase subunit 4L, chloroplastic (101 aa).

Helical transmembrane passes span 2–22, 32–52, and 61–81; these read MLEH…YGLI, MCLE…SDFF, and IFSI…PAIV.

Belongs to the complex I subunit 4L family. NDH is composed of at least 16 different subunits, 5 of which are encoded in the nucleus.

It localises to the plastid. The protein localises to the chloroplast thylakoid membrane. The enzyme catalyses a plastoquinone + NADH + (n+1) H(+)(in) = a plastoquinol + NAD(+) + n H(+)(out). It carries out the reaction a plastoquinone + NADPH + (n+1) H(+)(in) = a plastoquinol + NADP(+) + n H(+)(out). NDH shuttles electrons from NAD(P)H:plastoquinone, via FMN and iron-sulfur (Fe-S) centers, to quinones in the photosynthetic chain and possibly in a chloroplast respiratory chain. The immediate electron acceptor for the enzyme in this species is believed to be plastoquinone. Couples the redox reaction to proton translocation, and thus conserves the redox energy in a proton gradient. The protein is NAD(P)H-quinone oxidoreductase subunit 4L, chloroplastic of Lotus japonicus (Lotus corniculatus var. japonicus).